The chain runs to 81 residues: Putative membrane protein insertion efficiency factor (81 aa).

A disordered region spans residues 61 to 81 (NPGGYDPVPPIPTSRSSSMAE).

Belongs to the UPF0161 family.

Its subcellular location is the cell inner membrane. Could be involved in insertion of integral membrane proteins into the membrane. The protein is Putative membrane protein insertion efficiency factor of Pseudomonas fluorescens (strain Pf0-1).